The sequence spans 278 residues: MNMPQLSTIQIGDHELAYLDNKLTSAVTPTIVMLPGWCGDHHSFSELIPQLNDTHRVVAVNWRGHAPVPHDVSDFGYAEQAQDALAILDAIGVDEFLPVSASHGGWALVQLLVDAGPARARAGVVLDWLMRRPTPEFTAALLSLQDPEGWVDSCRALFHTWRPNDSDWVESRVERAKEFGFDMWARSGRVISGAYGEHGTPLEFMKTITPERHIRHLFSTPSDSDYVAPQEAFASENEWFSYALLGGTSHFPHLEMPDRVAAHIVELAKNTYQAGAMR.

The 130-residue stretch at proline 29–phenylalanine 158 folds into the AB hydrolase-1 domain. Residue histidine 103 participates in substrate binding. Catalysis depends on histidine 250, which acts as the Proton donor/acceptor.

The protein belongs to the AB hydrolase superfamily.

The enzyme catalyses 2-heptyl-3-hydroxy-4(1H)-quinolone + O2 = N-octanoylanthranilate + CO + H(+). Functionally, involved in the degradation of the Pseudomonas aeruginosa quorum sensing signal molecules HHQ (2-heptyl-4-quinolone) and PQS (2-heptyl-3-hydroxy-4-quinolone) to anthranilic acid. Catalyzes the cleavage of PQS to form N-octanoylanthranilic acid and carbon monoxide. The sequence is that of 2-heptyl-3-hydroxy-4-quinolone dioxygenase AqdC1 from Rhodococcus erythropolis (Arthrobacter picolinophilus).